Consider the following 399-residue polypeptide: Small ribosomal subunit protein uS3m (399 aa).

The protein belongs to the universal ribosomal protein uS3 family.

It localises to the mitochondrion. Functionally, essential for mitochondrial protein synthesis and required for the maturation of small ribosomal subunits. This is Small ribosomal subunit protein uS3m from Penicillium urticae.